Here is a 484-residue protein sequence, read N- to C-terminus: CUGBP Elav-like family member 2 (484 aa).

Necessary for nuclear export stretches follow at residues 1 to 89 and 90 to 178; these read MNGA…PGMH and HPIQ…EGCS. 3 RRM domains span residues 16–99, 108–188, and 399–477; these read IKTF…PADS, RKLF…FADT, and ANLF…LKRS. The tract at residues 188-240 is necessary for splicing activity; it reads TQKDKEQRRLQQQLAQQMQQLNTATWGNLTGLGGLTPQYLALLQQATSSSNLG. The segment at 347-399 is necessary for nuclear localization; that stretch reads GLTNGTAGTMDALTQAYSGIQQYAAAALPTLYSQSLLQQQSAAGSQKEGPEGA. The interval 426–484 is necessary for nuclear localization and splicing activity; it reads ISAKVFIDKQTNLSKCFGFVSYDNPVSAQAAIQAMNGFQIGMKRLKVQLKRSKNDSKPY.

Belongs to the CELF/BRUNOL family. Expressed in heart.

It is found in the nucleus. Its subcellular location is the cytoplasm. RNA-binding protein implicated in the regulation of several post-transcriptional events. May be involved in mRNA translation repression and stability. Mediates exon inclusion in TNNT2 pre-mRNA. This chain is CUGBP Elav-like family member 2 (CELF2), found in Gallus gallus (Chicken).